Consider the following 127-residue polypeptide: Dual endothelin-1/VEGF signal peptide receptor (127 aa).

Topologically, residues 1–65 (MNALYVTTVP…EMKSRWNWGS (65 aa)) are extracellular. The chain crosses the membrane as a helical span at residues 66-84 (ITCIICFTCVGSQLSMSSS). Residues 85–127 (KASNFSGPLQLYQRGIGHITNSYKRPQAPAWPCLSSGTMGRSH) lie on the Cytoplasmic side of the membrane.

In terms of tissue distribution, widely expressed with higher levels in kidney and aorta.

It is found in the cell membrane. Its function is as follows. Dual receptor for both endothelin-1 and the signal sequence of vascular endothelial growth factor A. Does not act as a receptor for angiotensin-2. Does not bind the VEGFA mature protein. May play a role in angiogenesis with a significant role in cardiovascular and neural development. This is Dual endothelin-1/VEGF signal peptide receptor from Mus musculus (Mouse).